A 275-amino-acid polypeptide reads, in one-letter code: NH(3)-dependent NAD(+) synthetase (275 aa).

46-53 (GISGGQDS) contributes to the ATP binding site. Aspartate 52 serves as a coordination point for Mg(2+). A deamido-NAD(+)-binding site is contributed by arginine 140. Threonine 160 serves as a coordination point for ATP. A Mg(2+)-binding site is contributed by glutamate 165. Residues lysine 173 and aspartate 180 each contribute to the deamido-NAD(+) site. ATP contacts are provided by lysine 189 and threonine 211. Position 260 to 261 (260 to 261 (HK)) interacts with deamido-NAD(+).

Belongs to the NAD synthetase family. Homodimer.

The enzyme catalyses deamido-NAD(+) + NH4(+) + ATP = AMP + diphosphate + NAD(+) + H(+). The protein operates within cofactor biosynthesis; NAD(+) biosynthesis; NAD(+) from deamido-NAD(+) (ammonia route): step 1/1. Its function is as follows. Catalyzes the ATP-dependent amidation of deamido-NAD to form NAD. Uses ammonia as a nitrogen source. In Salmonella arizonae (strain ATCC BAA-731 / CDC346-86 / RSK2980), this protein is NH(3)-dependent NAD(+) synthetase.